The sequence spans 514 residues: Putative fumarate hydratase class I (514 aa).

Positions 62, 187, and 274 each coordinate [4Fe-4S] cluster.

It belongs to the class-I fumarase family. Homodimer. Requires [4Fe-4S] cluster as cofactor.

The enzyme catalyses (S)-malate = fumarate + H2O. Its pathway is carbohydrate metabolism; tricarboxylic acid cycle; (S)-malate from fumarate: step 1/1. In terms of biological role, catalyzes the reversible hydration of fumarate to (S)-malate. The polypeptide is Putative fumarate hydratase class I (fumA) (Geobacillus stearothermophilus (Bacillus stearothermophilus)).